We begin with the raw amino-acid sequence, 259 residues long: Ferritin-3, chloroplastic (259 aa).

The N-terminal 49 residues, 1 to 49, are a transit peptide targeting the chloroplast; sequence MLLKAASTFSLLNIHGEKKDISPLFSSSSSISSPVSSGKSGNLSFPLRA. The segment at 50 to 88 is extension peptide (EP); the sequence is SKSSTTTTSTLSGVVFEPFEEVKKEMDLVPSGQQLSLAR. The Ferritin-like diiron domain maps to 89–242; that stretch reads HLYSPECEAA…EYVSQLRRLG (154 aa). Fe cation is bound by residues glutamate 106, glutamate 141, histidine 144, glutamate 190, and glutamine 224.

Belongs to the ferritin family. As to quaternary structure, oligomer of 24 subunits. There are two types of subunits: L (light) chain and H (heavy) chain. The major chain can be light or heavy, depending on the species and tissue type. The functional molecule forms a roughly spherical shell with a diameter of 12 nm and contains a central cavity into which the insoluble mineral iron core is deposited.

The protein localises to the plastid. It localises to the chloroplast. It catalyses the reaction 4 Fe(2+) + O2 + 4 H(+) = 4 Fe(3+) + 2 H2O. Its function is as follows. Stores iron in a soluble, non-toxic, readily available form. Important for iron homeostasis. Has ferroxidase activity. Iron is taken up in the ferrous form and deposited as ferric hydroxides after oxidation. The chain is Ferritin-3, chloroplastic (FER3) from Arabidopsis thaliana (Mouse-ear cress).